The following is a 191-amino-acid chain: Thymidine kinase (191 aa).

Residues 9–16 (GSMNSGKT) and 85–88 (DESQ) each bind ATP. E86 serves as the catalytic Proton acceptor. Zn(2+)-binding residues include C143, C146, C181, and C184.

This sequence belongs to the thymidine kinase family. Homotetramer.

Its subcellular location is the cytoplasm. It catalyses the reaction thymidine + ATP = dTMP + ADP + H(+). In Listeria monocytogenes serovar 1/2a (strain ATCC BAA-679 / EGD-e), this protein is Thymidine kinase.